The sequence spans 453 residues: Carbamoyl phosphate synthase arginine-specific small chain (453 aa).

A mitochondrion-targeting transit peptide spans 1–28; the sequence is MFARVFKAMPARASALTSVNASIPARFM. The Glutamine amidotransferase type-1 domain maps to 219–406; that stretch reads HVAVIDCGVK…IDSVKKYKAS (188 aa). Cys295 serves as the catalytic Nucleophile. Catalysis depends on residues His379 and Glu381.

The protein belongs to the CarA family. Heterodimer composed of 2 chains; the small (or glutamine) chain promotes the hydrolysis of glutamine to ammonia, which is used by the large (or ammonia) chain to synthesize carbamoyl phosphate.

The protein resides in the mitochondrion matrix. It catalyses the reaction hydrogencarbonate + L-glutamine + 2 ATP + H2O = carbamoyl phosphate + L-glutamate + 2 ADP + phosphate + 2 H(+). It carries out the reaction L-glutamine + H2O = L-glutamate + NH4(+). The protein operates within amino-acid biosynthesis; L-arginine biosynthesis; carbamoyl phosphate from bicarbonate: step 1/1. Small subunit of the arginine-specific carbamoyl phosphate synthase (CPSase). CPSase catalyzes the formation of carbamoyl phosphate from the ammonia moiety of glutamine, carbonate, and phosphate donated by ATP, the first step of the arginine biosynthetic pathway. The small subunit (glutamine amidotransferase) binds and cleaves glutamine to supply the large subunit with the substrate ammonia. The sequence is that of Carbamoyl phosphate synthase arginine-specific small chain (cpa1) from Aspergillus fumigatus (strain ATCC MYA-4609 / CBS 101355 / FGSC A1100 / Af293) (Neosartorya fumigata).